Here is a 142-residue protein sequence, read N- to C-terminus: HTH-type transcriptional regulator MntR (142 aa).

The HTH dtxR-type domain maps to 1 to 63; the sequence is MPTPSMEDYI…YEKYRGLILT (63 aa). Mn(2+) contacts are provided by aspartate 8, glutamate 11, histidine 77, glutamate 99, glutamate 102, and histidine 103.

Belongs to the DtxR/MntR family. As to quaternary structure, homodimer.

Its subcellular location is the cytoplasm. Its activity is regulated as follows. DNA binding is strongly activated by Mn(2+). Its function is as follows. Central regulator of manganese homeostasis. This is HTH-type transcriptional regulator MntR from Listeria monocytogenes serotype 4b (strain CLIP80459).